A 472-amino-acid polypeptide reads, in one-letter code: Putative diacyglycerol O-acyltransferase MT3172 (472 aa).

His-139 serves as the catalytic Proton acceptor. The segment at 217–238 (DRRVPPTFDRSAPPGPFQRGLS) is disordered.

It belongs to the long-chain O-acyltransferase family.

The enzyme catalyses an acyl-CoA + a 1,2-diacyl-sn-glycerol = a triacyl-sn-glycerol + CoA. It participates in glycerolipid metabolism; triacylglycerol biosynthesis. The polypeptide is Putative diacyglycerol O-acyltransferase MT3172 (Mycobacterium tuberculosis (strain CDC 1551 / Oshkosh)).